Reading from the N-terminus, the 509-residue chain is ATP synthase subunit alpha (509 aa).

169–176 (GDRQTGKT) is an ATP binding site.

The protein belongs to the ATPase alpha/beta chains family. In terms of assembly, F-type ATPases have 2 components, CF(1) - the catalytic core - and CF(0) - the membrane proton channel. CF(1) has five subunits: alpha(3), beta(3), gamma(1), delta(1), epsilon(1). CF(0) has three main subunits: a(1), b(2) and c(9-12). The alpha and beta chains form an alternating ring which encloses part of the gamma chain. CF(1) is attached to CF(0) by a central stalk formed by the gamma and epsilon chains, while a peripheral stalk is formed by the delta and b chains.

The protein resides in the cell inner membrane. It catalyses the reaction ATP + H2O + 4 H(+)(in) = ADP + phosphate + 5 H(+)(out). In terms of biological role, produces ATP from ADP in the presence of a proton gradient across the membrane. The alpha chain is a regulatory subunit. The protein is ATP synthase subunit alpha of Sinorhizobium fredii (strain NBRC 101917 / NGR234).